The primary structure comprises 450 residues: Phosphoglucosamine mutase (450 aa).

The active-site Phosphoserine intermediate is the Ser100. Ser100, Asp240, Asp242, and Asp244 together coordinate Mg(2+). Phosphoserine is present on Ser100.

The protein belongs to the phosphohexose mutase family. It depends on Mg(2+) as a cofactor. Activated by phosphorylation.

It catalyses the reaction alpha-D-glucosamine 1-phosphate = D-glucosamine 6-phosphate. Its function is as follows. Catalyzes the conversion of glucosamine-6-phosphate to glucosamine-1-phosphate. This chain is Phosphoglucosamine mutase, found in Desulforudis audaxviator (strain MP104C).